The chain runs to 359 residues: Guanine nucleotide-binding protein-like alpha-11 subunit (359 aa).

Residue G2 is the site of N-myristoyl glycine attachment. The 331-residue stretch at 29–359 folds into the G-alpha domain; the sequence is KLIKILMMGN…YVKKILEDTI (331 aa). Residues 32–45 form a G1 motif region; that stretch reads KILMMGNENSAKST. S44 is a binding site for Mg(2+). The segment at 176-185 is G2 motif; the sequence is DIIRCSKNNQ. GTP contacts are provided by residues 178 to 185, 204 to 208, and 281 to 284; these read IRCSKNNQ, DTGNQ, and NKKE. A G3 motif region spans residues 200-209; sequence FVFVDTGNQK. The interval 277–284 is G4 motif; the sequence is IVLFNKKE. Residues 337 to 342 form a G5 motif region; it reads FNSSDT.

This sequence belongs to the G-alpha family.

In Dictyostelium discoideum (Social amoeba), this protein is Guanine nucleotide-binding protein-like alpha-11 subunit (gpaK).